The chain runs to 117 residues: Large ribosomal subunit protein uL18 (117 aa).

This sequence belongs to the universal ribosomal protein uL18 family. Part of the 50S ribosomal subunit; part of the 5S rRNA/L5/L18/L25 subcomplex. Contacts the 5S and 23S rRNAs.

In terms of biological role, this is one of the proteins that bind and probably mediate the attachment of the 5S RNA into the large ribosomal subunit, where it forms part of the central protuberance. This chain is Large ribosomal subunit protein uL18, found in Mycoplasma mobile (strain ATCC 43663 / 163K / NCTC 11711) (Mesomycoplasma mobile).